The primary structure comprises 139 residues: Plastocyanin (139 aa).

Residues 1-34 (MKLIAASLRRLSLAVLTVLLVVSSFAVFTPSAAA) form the signal peptide. In terms of domain architecture, Plastocyanin-like spans 35 to 135 (ETYTVKLGSD…HRGAGMVGKI (101 aa)). 4 residues coordinate Cu cation: His73, Cys123, His126, and Met131.

The protein belongs to the plastocyanin family. Requires Cu(2+) as cofactor.

It is found in the cellular thylakoid membrane. Functionally, participates in electron transfer between P700 and the cytochrome b6-f complex in photosystem I. This chain is Plastocyanin (petE), found in Trichormus variabilis (strain ATCC 29413 / PCC 7937) (Anabaena variabilis).